Here is a 133-residue protein sequence, read N- to C-terminus: Small ribosomal subunit protein eS8 (133 aa).

The interval 1-22 (MGFYQGPDNRKITGGLKGKHRD) is disordered.

It belongs to the eukaryotic ribosomal protein eS8 family. In terms of assembly, part of the 30S ribosomal subunit.

In Saccharolobus islandicus (strain Y.N.15.51 / Yellowstone #2) (Sulfolobus islandicus), this protein is Small ribosomal subunit protein eS8.